The chain runs to 518 residues: Phosphoacetylglucosamine mutase 1 (518 aa).

At Thr49 the chain carries Phosphothreonine. Ser51 acts as the Phosphoserine intermediate in catalysis. Mg(2+)-binding residues include Ser51, Asp267, Asp269, and Asp271. Ser51 carries the post-translational modification Phosphoserine. Substrate contacts are provided by residues 360-362 (EAN), 486-490 (RASGT), and Arg495.

Belongs to the phosphohexose mutase family. The cofactor is Mg(2+).

It localises to the cytoplasm. The protein resides in the nucleus. It catalyses the reaction N-acetyl-alpha-D-glucosamine 1-phosphate = N-acetyl-D-glucosamine 6-phosphate. It functions in the pathway nucleotide-sugar biosynthesis; UDP-N-acetyl-alpha-D-glucosamine biosynthesis; N-acetyl-alpha-D-glucosamine 1-phosphate from alpha-D-glucosamine 6-phosphate (route I): step 2/2. In terms of biological role, catalyzes the conversion of GlcNAc-6-P into GlcNAc-1-P during the synthesis of uridine diphosphate/UDP-GlcNAc, which is a biosynthetic precursor of chitin and also supplies the amino sugars for N-linked oligosaccharides of glycoproteins. This is Phosphoacetylglucosamine mutase 1 from Schizosaccharomyces pombe (strain 972 / ATCC 24843) (Fission yeast).